We begin with the raw amino-acid sequence, 200 residues long: 3-isopropylmalate dehydratase small subunit (200 aa).

The protein belongs to the LeuD family. LeuD type 1 subfamily. Heterodimer of LeuC and LeuD.

The catalysed reaction is (2R,3S)-3-isopropylmalate = (2S)-2-isopropylmalate. It participates in amino-acid biosynthesis; L-leucine biosynthesis; L-leucine from 3-methyl-2-oxobutanoate: step 2/4. Catalyzes the isomerization between 2-isopropylmalate and 3-isopropylmalate, via the formation of 2-isopropylmaleate. This chain is 3-isopropylmalate dehydratase small subunit, found in Campylobacter jejuni subsp. jejuni serotype O:23/36 (strain 81-176).